The sequence spans 728 residues: Polyribonucleotide nucleotidyltransferase (728 aa).

Mg(2+)-binding residues include Asp513 and Asp519. In terms of domain architecture, KH spans 580–640; the sequence is PKVKMILIKP…EIVDLTVTYI (61 aa). Residues 650-724 form the S1 motif domain; sequence ENVYEVKILR…ERGQIDLSKK (75 aa).

This sequence belongs to the polyribonucleotide nucleotidyltransferase family. Mg(2+) is required as a cofactor.

The protein localises to the cytoplasm. The enzyme catalyses RNA(n+1) + phosphate = RNA(n) + a ribonucleoside 5'-diphosphate. Involved in mRNA degradation. Catalyzes the phosphorolysis of single-stranded polyribonucleotides processively in the 3'- to 5'-direction. This is Polyribonucleotide nucleotidyltransferase from Phytoplasma mali (strain AT).